Reading from the N-terminus, the 348-residue chain is Ninja-family protein AFP2 (348 aa).

Positions 186-272 (DSDGGGATGG…VDRKGKGMAT (87 aa)) are disordered. The segment covering 187-197 (SDGGGATGGGS) has biased composition (gly residues). 2 stretches are compositionally biased toward polar residues: residues 207-216 (KNQQGSSNSC) and 228-244 (CSSNSGSQGTERPSVTR). A compositionally biased stretch (basic and acidic residues) spans 247-267 (KVNENENEKRVRSEDSVDRKG).

This sequence belongs to the Ninja family. In terms of assembly, forms a homodimer and heterodimer with AFP1 and AFP3. Interacts with ABI5/DPBF1, DPBF2, AREB3/DPBF3, EEL/DPBF4, ABF1, ABF3/DPBF5 and ABF4/AREB2.

Its subcellular location is the nucleus. Functionally, acts as a negative regulator of abscisic acid (ABA) response during germination through the ubiquitin-mediated proteolysis of ABI5/DPBF1. In Arabidopsis thaliana (Mouse-ear cress), this protein is Ninja-family protein AFP2 (AFP2).